Reading from the N-terminus, the 162-residue chain is Precorrin-2 dehydrogenase (162 aa).

NAD(+) contacts are provided by residues 20–21 (SI) and 41–42 (PD).

It belongs to the precorrin-2 dehydrogenase / sirohydrochlorin ferrochelatase family.

The catalysed reaction is precorrin-2 + NAD(+) = sirohydrochlorin + NADH + 2 H(+). It participates in cofactor biosynthesis; adenosylcobalamin biosynthesis; sirohydrochlorin from precorrin-2: step 1/1. Its pathway is porphyrin-containing compound metabolism; siroheme biosynthesis; sirohydrochlorin from precorrin-2: step 1/1. Catalyzes the dehydrogenation of precorrin-2 to form sirohydrochlorin which is used as a precursor in both siroheme biosynthesis and in the anaerobic branch of adenosylcobalamin biosynthesis. This Bacillus subtilis (strain 168) protein is Precorrin-2 dehydrogenase (sirC).